Here is a 512-residue protein sequence, read N- to C-terminus: Maturase K (512 aa).

This sequence belongs to the intron maturase 2 family. MatK subfamily.

The protein localises to the plastid. It localises to the chloroplast. In terms of biological role, usually encoded in the trnK tRNA gene intron. Probably assists in splicing its own and other chloroplast group II introns. The chain is Maturase K from Amorphophallus titanum (Titan arum).